The primary structure comprises 238 residues: Probable transcriptional regulatory protein Sde_1551 (238 aa).

The protein belongs to the TACO1 family.

The protein localises to the cytoplasm. The chain is Probable transcriptional regulatory protein Sde_1551 from Saccharophagus degradans (strain 2-40 / ATCC 43961 / DSM 17024).